A 433-amino-acid polypeptide reads, in one-letter code: MGFHIYEIKARQIIDSRGNPTVEADVILEDGTYGRAAVPSGASTGINEAVELRDGDKSVYMGKGVLKAIENIKNIIAPELEGMSALNQVAIDRKMLELDGTPTKEKLGANAILAVSMATAKAAAKYLGLRPYQYLGAYKANILPTPMCNIINGGAHSDNSVDFQEFMIMPIGAKTFSEAIRMAAEVFHTLKGILSGKGYATSVGDEGGFAPNLKSNEEACEVIIEAIKKAGYEPGKDIAIALDPATSELYDPKTKKYVLKWSTKEELTSEQMVEYWAKWVEKYPIISIEDGMAEEDWDGWKKLTDKIGNKIQLVGDDLFVTNTSFLKKGIEMGVANSILIKVNQIGTLTETFEAVEMAKKAGYTAIVSHRSGETEDTTIADLVVALGTGQIKTGSLSRTDRIAKYNQLIRIEEELETTAEYHGKSVFYSIKQK.

Gln-164 contacts (2R)-2-phosphoglycerate. The Proton donor role is filled by Glu-206. Mg(2+)-binding residues include Asp-243, Glu-289, and Asp-316. 4 residues coordinate (2R)-2-phosphoglycerate: Lys-341, Arg-370, Ser-371, and Lys-392. Catalysis depends on Lys-341, which acts as the Proton acceptor.

Belongs to the enolase family. The cofactor is Mg(2+).

It localises to the cytoplasm. Its subcellular location is the secreted. The protein localises to the cell surface. The enzyme catalyses (2R)-2-phosphoglycerate = phosphoenolpyruvate + H2O. It participates in carbohydrate degradation; glycolysis; pyruvate from D-glyceraldehyde 3-phosphate: step 4/5. Its function is as follows. Catalyzes the reversible conversion of 2-phosphoglycerate (2-PG) into phosphoenolpyruvate (PEP). It is essential for the degradation of carbohydrates via glycolysis. The sequence is that of Enolase from Borreliella burgdorferi (strain ZS7) (Borrelia burgdorferi).